The primary structure comprises 1100 residues: ATP-dependent DNA helicase mph1 (1100 aa).

Acidic residues predominate over residues 1–21 (MSDSDDYLQDDPDDQAFDDFA). Residues 1–250 (MSDSDDYLQD…RPSSFMQSSN (250 aa)) form a disordered region. A compositionally biased stretch (low complexity) spans 38–61 (RNQTRNTTSRRNEDNSVASDSDSF). Residues 84–94 (FADHPENEASS) show a composition bias toward basic and acidic residues. A compositionally biased stretch (polar residues) spans 104–117 (NNPQENIFVTQLTQ). Positions 135 to 146 (PPPPPPPAPTKP) are enriched in pro residues. Polar residues-rich tracts occupy residues 182–191 (RLSFSTAQNS) and 200–209 (NAPTNTAQTE). Residues 212-223 (DFLDDIPDDAFD) are compositionally biased toward acidic residues. Residues 237–249 (SNSSRPSSFMQSS) show a composition bias toward low complexity. In terms of domain architecture, Helicase ATP-binding spans 317 to 485 (ITQKGLFHNL…AVIDGLEISK (169 aa)). 330-337 (LPTGLGKT) provides a ligand contact to ATP. Positions 433-436 (DEAH) match the DEAH box motif. Residues 655-829 (YLKQVVLNHF…GTRFTFHDDK (175 aa)) form the Helicase C-terminal domain. Disordered stretches follow at residues 850–913 (PEEN…PEPV) and 1003–1100 (RRPA…LGRR). 2 stretches are compositionally biased toward basic residues: residues 863-875 (RRGR…PKKF) and 1019-1028 (GNKKRLRKGR). Over residues 1053–1066 (QPISPEQLLSSFTD) the composition is skewed to polar residues. Positions 1082–1092 (LELDADFEAPD) are enriched in acidic residues.

This sequence belongs to the DEAD box helicase family. DEAH subfamily. FANCM sub-subfamily. Interacts with the MHF histone-fold complex to form the FANCM-MHF complex.

The protein localises to the nucleus. The enzyme catalyses ATP + H2O = ADP + phosphate + H(+). ATP-dependent DNA helicase involved in DNA damage repair by homologous recombination and in genome maintenance. Capable of unwinding D-loops. Plays a role in limiting crossover recombinants during mitotic DNA double-strand break (DSB) repair. Component of a FANCM-MHF complex which promotes gene conversion at blocked replication forks, probably by reversal of the stalled fork. In Aspergillus terreus (strain NIH 2624 / FGSC A1156), this protein is ATP-dependent DNA helicase mph1.